The primary structure comprises 479 residues: MAMDIEKKIYLKRQLGYFWGTNFLIINIIGAGIFVSPKGVLQYSSMNVGVSLCVWVFCAVLSMTSTLCAAEIGITFPYTVAHYYFLKRCFGPFVAFLRLWTSLFTGPGVLASQALLLAEYGIQPFYPSCSAPAVPKKCLALAMLWIVGILNSRGVKELSWLQTVSMVLKMGILSFISLSGLFLLVTGRKENVRRLQNAFDAEFPEVSRLIEAIFQGYFAFSGGGSFTYVAGELKEPSKTIPRCIFTALPLVTVVYLLANLSYLTVLSPQELLSSDAVALTWTDRVIPQLTWSVPFAISASLFSNLVTSVFETSRTSYIASRNGQLPLLCSTLNVHSSPFIAVLLDVSMGSIAIVLTNLIELINYLFFVFSIWTVLSVIGILKLRYQEPNLHRPYKVFSPFLFITAAISLSMVLIPLIKSPKMQYIYVFLFFLGGLLFYVPLIHFKLKLIWFQKLTCYLQLLFNICIPDVSDEHVAEEES.

The Cytoplasmic segment spans residues 1–14 (MAMDIEKKIYLKRQ). The helical transmembrane segment at 15–35 (LGYFWGTNFLIINIIGAGIFV) threads the bilayer. At 36–47 (SPKGVLQYSSMN) the chain is on the extracellular side. The chain crosses the membrane as a helical span at residues 48 to 68 (VGVSLCVWVFCAVLSMTSTLC). Residues 69–89 (AAEIGITFPYTVAHYYFLKRC) lie on the Cytoplasmic side of the membrane. The helical transmembrane segment at 90–110 (FGPFVAFLRLWTSLFTGPGVL) threads the bilayer. Residues 111–129 (ASQALLLAEYGIQPFYPSC) lie on the Extracellular side of the membrane. Residues 130 to 150 (SAPAVPKKCLALAMLWIVGIL) traverse the membrane as a helical segment. Residues 151–165 (NSRGVKELSWLQTVS) are Cytoplasmic-facing. Residues 166 to 186 (MVLKMGILSFISLSGLFLLVT) traverse the membrane as a helical segment. Topologically, residues 187–208 (GRKENVRRLQNAFDAEFPEVSR) are extracellular. Residues 209–229 (LIEAIFQGYFAFSGGGSFTYV) form a helical membrane-spanning segment. Residues 230 to 242 (AGELKEPSKTIPR) are Cytoplasmic-facing. Residues 243-263 (CIFTALPLVTVVYLLANLSYL) form a helical membrane-spanning segment. The Extracellular portion of the chain corresponds to 264–289 (TVLSPQELLSSDAVALTWTDRVIPQL). A helical membrane pass occupies residues 290 to 310 (TWSVPFAISASLFSNLVTSVF). Residues 311 to 338 (ETSRTSYIASRNGQLPLLCSTLNVHSSP) are Cytoplasmic-facing. Residues 339 to 359 (FIAVLLDVSMGSIAIVLTNLI) form a helical membrane-spanning segment. Glu-360 is a topological domain (extracellular). A helical membrane pass occupies residues 361–381 (LINYLFFVFSIWTVLSVIGIL). Over 382–396 (KLRYQEPNLHRPYKV) the chain is Cytoplasmic. A helical transmembrane segment spans residues 397 to 417 (FSPFLFITAAISLSMVLIPLI). At 418–423 (KSPKMQ) the chain is on the extracellular side. The chain crosses the membrane as a helical span at residues 424–444 (YIYVFLFFLGGLLFYVPLIHF). Over 445 to 479 (KLKLIWFQKLTCYLQLLFNICIPDVSDEHVAEEES) the chain is Cytoplasmic.

It belongs to the amino acid-polyamine-organocation (APC) superfamily. As to quaternary structure, disulfide-linked heterodimer composed of the catalytic light subunit SLC7A13 and the heavy subunit SLC3A1.

It localises to the apical cell membrane. It catalyses the reaction L-cystine(out) + L-aspartate(in) = L-cystine(in) + L-aspartate(out). The enzyme catalyses L-cystine(out) = L-cystine(in). The catalysed reaction is L-aspartate(in) + L-glutamate(out) = L-aspartate(out) + L-glutamate(in). It carries out the reaction L-aspartate(in) + L-glutamine(out) = L-aspartate(out) + L-glutamine(in). It catalyses the reaction L-aspartate(in) + L-methionine(out) = L-aspartate(out) + L-methionine(in). The enzyme catalyses L-leucine(out) + L-aspartate(in) = L-leucine(in) + L-aspartate(out). The catalysed reaction is L-valine(out) + L-aspartate(in) = L-valine(in) + L-aspartate(out). It carries out the reaction L-aspartate(in) + L-phenylalanine(out) = L-aspartate(out) + L-phenylalanine(in). It catalyses the reaction L-tyrosine(out) + L-aspartate(in) = L-tyrosine(in) + L-aspartate(out). The enzyme catalyses L-tryptophan(out) + L-aspartate(in) = L-tryptophan(in) + L-aspartate(out). Functionally, associates with SLC3A1/rBAT to form a functional heterodimeric complex that transports anionic and neutral amino acids across the apical plasma membrane of renal epithelium. Preferentially mediates exchange transport, but can also operate via facilitated diffusion. May act as a major transporter for L-cystine in late proximal tubules, ensuring its reabsorption from the luminal fluid in exchange for cytosolic L-glutamate or L-aspartate. This Rattus norvegicus (Rat) protein is Solute carrier family 7 member 13 (Slc7a13).